Consider the following 240-residue polypeptide: Ribosome maturation protein SDO1 homolog (240 aa).

It belongs to the SDO1/SBDS family.

The sequence is that of Ribosome maturation protein SDO1 homolog from Methanocaldococcus jannaschii (strain ATCC 43067 / DSM 2661 / JAL-1 / JCM 10045 / NBRC 100440) (Methanococcus jannaschii).